Reading from the N-terminus, the 432-residue chain is Adenylosuccinate synthetase (432 aa).

Residues 12–18 and 40–42 each bind GTP; these read GDEGKGK and GHT. D13 serves as the catalytic Proton acceptor. Mg(2+) contacts are provided by D13 and G40. IMP is bound by residues 13-16, 38-41, T129, R143, Q224, T239, and R303; these read DEGK and NAGH. H41 functions as the Proton donor in the catalytic mechanism. Substrate is bound at residue 299–305; the sequence is VTTGRRR. GTP contacts are provided by residues R305, 331 to 333, and 413 to 415; these read KLD and GVG.

The protein belongs to the adenylosuccinate synthetase family. As to quaternary structure, homodimer. The cofactor is Mg(2+).

The protein resides in the cytoplasm. It carries out the reaction IMP + L-aspartate + GTP = N(6)-(1,2-dicarboxyethyl)-AMP + GDP + phosphate + 2 H(+). It functions in the pathway purine metabolism; AMP biosynthesis via de novo pathway; AMP from IMP: step 1/2. Plays an important role in the de novo pathway of purine nucleotide biosynthesis. Catalyzes the first committed step in the biosynthesis of AMP from IMP. The sequence is that of Adenylosuccinate synthetase from Mycobacterium tuberculosis (strain CDC 1551 / Oshkosh).